The following is a 322-amino-acid chain: Peroxidase 66 (322 aa).

Residues 1–24 form the signal peptide; the sequence is MAFSKGLIFAMIFAVLAIVKPSEA. Disulfide bonds link Cys35/Cys114 and Cys68/Cys73. His66 acts as the Proton acceptor in catalysis. Ca(2+) is bound by residues Asp67, Gly72, Asp74, and Ser76. Asn155 carries N-linked (GlcNAc...) asparagine glycosylation. Pro161 is a substrate binding site. A glycan (N-linked (GlcNAc...) asparagine) is linked at Asn166. Heme b is bound at residue His191. Position 192 (Thr192) interacts with Ca(2+). An intrachain disulfide couples Cys198 to Cys230. Asn207 carries N-linked (GlcNAc...) asparagine glycosylation. Residues Asp245, Thr247, and Asp252 each contribute to the Ca(2+) site.

The protein belongs to the peroxidase family. Classical plant (class III) peroxidase subfamily. Heme b serves as cofactor. The cofactor is Ca(2+).

The protein resides in the secreted. The enzyme catalyses 2 a phenolic donor + H2O2 = 2 a phenolic radical donor + 2 H2O. Removal of H(2)O(2), oxidation of toxic reductants, biosynthesis and degradation of lignin, suberization, auxin catabolism, response to environmental stresses such as wounding, pathogen attack and oxidative stress. These functions might be dependent on each isozyme/isoform in each plant tissue. This is Peroxidase 66 (PER66) from Arabidopsis thaliana (Mouse-ear cress).